The primary structure comprises 121 residues: UPF0102 protein HRM2_30940 (121 aa).

Belongs to the UPF0102 family.

The sequence is that of UPF0102 protein HRM2_30940 from Desulforapulum autotrophicum (strain ATCC 43914 / DSM 3382 / VKM B-1955 / HRM2) (Desulfobacterium autotrophicum).